The sequence spans 268 residues: Phosphatidylglycerol--prolipoprotein diacylglyceryl transferase (268 aa).

The next 4 helical transmembrane spans lie at 23-43 (WYAL…LALA), 58-78 (FLTW…VLFY), 96-116 (GGMS…LFCW), and 119-139 (GLSP…GLFF). Arg-141 is an a 1,2-diacyl-sn-glycero-3-phospho-(1'-sn-glycerol) binding site. The next 3 helical transmembrane spans lie at 181-201 (SFLE…MPAV), 206-226 (GMTA…AEFF), and 238-258 (AGAT…VWLV).

It belongs to the Lgt family.

It is found in the cell inner membrane. It carries out the reaction L-cysteinyl-[prolipoprotein] + a 1,2-diacyl-sn-glycero-3-phospho-(1'-sn-glycerol) = an S-1,2-diacyl-sn-glyceryl-L-cysteinyl-[prolipoprotein] + sn-glycerol 1-phosphate + H(+). Its pathway is protein modification; lipoprotein biosynthesis (diacylglyceryl transfer). Functionally, catalyzes the transfer of the diacylglyceryl group from phosphatidylglycerol to the sulfhydryl group of the N-terminal cysteine of a prolipoprotein, the first step in the formation of mature lipoproteins. This chain is Phosphatidylglycerol--prolipoprotein diacylglyceryl transferase, found in Azospirillum brasilense.